Here is a 1152-residue protein sequence, read N- to C-terminus: Integrin alpha-M (1152 aa).

Positions 1–16 (MALRVLLLTALTLCHG) are cleaved as a signal peptide. Topologically, residues 17 to 1104 (FNLDTENAMT…TKVEPFEVPN (1088 aa)) are extracellular. 2 FG-GAP repeats span residues 18-75 (NLDT…SCEP) and 76-135 (IRLQ…QQPQ). Cysteines 66 and 73 form a disulfide. A glycan (N-linked (GlcNAc...) asparagine) is linked at asparagine 86. Cysteine 105 and cysteine 123 are oxidised to a cystine. In terms of domain architecture, VWFA spans 150–328 (DIAFLIDGSG…EALKTIQNQL (179 aa)). Residue asparagine 240 is glycosylated (N-linked (GlcNAc...) asparagine). FG-GAP repeat units lie at residues 339 to 390 (QTGS…STFI), 391 to 442 (NMTR…TGMW), 443 to 503 (ESNA…RARW), 506 to 564 (DAVL…SGIS), and 569 to 629 (QRIA…FNPR). An N-linked (GlcNAc...) asparagine glycan is attached at asparagine 391. Aspartate 465, aspartate 467, asparagine 469, aspartate 473, aspartate 529, asparagine 531, aspartate 533, aspartate 537, aspartate 592, aspartate 596, and aspartate 600 together coordinate Ca(2+). Asparagine 469 is a glycosylation site (N-linked (GlcNAc...) asparagine). An intrachain disulfide couples cysteine 654 to cysteine 711. 3 N-linked (GlcNAc...) asparagine glycosylation sites follow: asparagine 692, asparagine 696, and asparagine 734. Cysteine 770 and cysteine 776 are oxidised to a cystine. Asparagine 801 carries N-linked (GlcNAc...) asparagine glycosylation. Residues cysteine 847 and cysteine 864 are joined by a disulfide bond. Residues asparagine 880, asparagine 900, asparagine 911, asparagine 940, asparagine 946, asparagine 978, asparagine 993, and asparagine 1021 are each glycosylated (N-linked (GlcNAc...) asparagine). 2 disulfides stabilise this stretch: cysteine 998–cysteine 1022 and cysteine 1027–cysteine 1032. Residues asparagine 1044, asparagine 1050, and asparagine 1075 are each glycosylated (N-linked (GlcNAc...) asparagine). The helical transmembrane segment at 1105-1128 (PLPLIVGSSVGGLLLLALITAALY) threads the bilayer. The Cytoplasmic segment spans residues 1129–1152 (KLGFFKRQYKDMMSEGGPPGAEPQ). The short motif at 1131–1135 (GFFKR) is the GFFKR motif element.

This sequence belongs to the integrin alpha chain family. As to quaternary structure, heterodimer of an alpha and a beta subunit. ITGAM associates with ITGB2. Found in a complex with CD177 and ITGB2/CD18. Interacts with JAM3. Interacts with THBD. Interacts with complement factor H/CFH; this interaction mediates adhesion of neutrophils to pathogens leading to pathogen clearance. Interacts with TMEM268; this interaction inhibits ITGAM degradation via the endosome-lysosome pathway. Predominantly expressed in monocytes and granulocytes. Expressed in neutrophils (at protein level).

The protein resides in the cell membrane. Its subcellular location is the membrane raft. Integrin ITGAM/ITGB2 is implicated in various adhesive interactions of monocytes, macrophages and granulocytes as well as in mediating the uptake of complement-coated particles and pathogens. It is identical with CR-3, the receptor for the iC3b fragment of the third complement component. It probably recognizes the R-G-D peptide in C3b. Integrin ITGAM/ITGB2 is also a receptor for fibrinogen, factor X and ICAM1. It recognizes P1 and P2 peptides of fibrinogen gamma chain. Regulates neutrophil migration. In association with beta subunit ITGB2/CD18, required for CD177-PRTN3-mediated activation of TNF primed neutrophils. May regulate phagocytosis-induced apoptosis in extravasated neutrophils. May play a role in mast cell development. Required with TYROBP/DAP12 in microglia to control production of microglial superoxide ions which promote the neuronal apoptosis that occurs during brain development. In Homo sapiens (Human), this protein is Integrin alpha-M (ITGAM).